We begin with the raw amino-acid sequence, 3101 residues long: Probable polyketide synthase 32 (3101 aa).

The Ketosynthase family 3 (KS3) domain occupies 27-465 (SGDVAVIGIG…GSNVCLILSE (439 aa)). Residues C199, H338, and H388 each act as for beta-ketoacyl synthase activity in the active site. Positions 664-697 (GVSADIIIGHSLGEVSSAYCSGMIDFETLCYLTY) are acyl/malonyl transferase. Catalysis depends on S674, which acts as the For acyl/malonyl transferase activity. The segment at 965–1087 (GPSINNLGNN…GNFSLTKHNS (123 aa)) is N-terminal hotdog fold. The PKS/mFAS DH domain maps to 965–1287 (GPSINNLGNN…CTLVSLPNPE (323 aa)). The Proton acceptor; for dehydratase activity role is filled by H999. The interval 1104–1287 (NFTSISKQDL…CTLVSLPNPE (184 aa)) is C-terminal hotdog fold. Catalysis depends on D1176, which acts as the Proton donor; for dehydratase activity. Residues 1209–1236 (KNGNNNDDDEESNNNNNNNNNNNNNNNN) form a disordered region. Residues 1221-1236 (NNNNNNNNNNNNNNNN) show a composition bias toward low complexity. The Carrier domain occupies 2550 to 2627 (DNNEIIRSTI…QSIEIIKSAN (78 aa)). O-(pantetheine 4'-phosphoryl)serine is present on S2587. Residues 2627 to 2648 (NNKNNKNNNNNNNNKTNKNNNN) are disordered.

Pantetheine 4'-phosphate is required as a cofactor.

Functionally, probable polyketide synthase. The protein is Probable polyketide synthase 32 (pks32) of Dictyostelium discoideum (Social amoeba).